The following is a 402-amino-acid chain: Putative FBD-associated F-box protein At5g56690 (402 aa).

One can recognise an F-box domain in the interval 1 to 47 (MAEISGLPDDLLVKILAFLPTKVAISTSVLSKQWRFLWMWLPKLKYD). The 53-residue stretch at 349–401 (SWSKNQGSVPKCFLNSLETFRVKWYYSEEQEDRDFLSLIFKHARCLKSTSILH) folds into the FBD domain.

The polypeptide is Putative FBD-associated F-box protein At5g56690 (Arabidopsis thaliana (Mouse-ear cress)).